We begin with the raw amino-acid sequence, 302 residues long: Protein FdhE homolog (302 aa).

This sequence belongs to the FdhE family.

It is found in the cytoplasm. Its function is as follows. Necessary for formate dehydrogenase activity. The chain is Protein FdhE homolog from Haemophilus influenzae (strain PittEE).